Consider the following 885-residue polypeptide: Alpha-actinin (885 aa).

Residues Met-1–His-242 are actin-binding. Calponin-homology (CH) domains lie at Lys-26–Ala-130 and Met-139–His-245. Spectrin repeat units lie at residues Leu-270–Leu-377, His-389–Glu-494, Glu-508–Gln-614, and Leu-626–Glu-727. EF-hand domains lie at Glu-741–Asn-776 and Asp-780–Asp-815. Residues Asp-754, Thr-758, Arg-760, Glu-765, Asp-793, Asn-795, Thr-797, and Tyr-799 each coordinate Ca(2+).

Belongs to the alpha-actinin family. Homodimer; antiparallel.

Its function is as follows. F-actin cross-linking protein which is thought to anchor actin to a variety of intracellular structures. This is a bundling protein. The sequence is that of Alpha-actinin from Dermatophagoides farinae (American house dust mite).